We begin with the raw amino-acid sequence, 297 residues long: Magnetosome protein MamB (297 aa).

Residues 1 to 12 (MKFENCRDCREE) are Cytoplasmic-facing. The transmembrane domain (TMD) stretch occupies residues 1 to 214 (MKFENCRDCR…GLMDSSVDTE (214 aa)). A helical membrane pass occupies residues 13 to 33 (VVWWAFTADICMTLFKGILGL). The Lumenal portion of the chain corresponds to 34–83 (MSGSVALVADSLHSGADVVASGVTQLSLKISNKPADERYPFGYGNIQYIS). Residues 84–104 (SAIVGSLLLIGASFLMYGSVV) form a helical membrane-spanning segment. Residues 105-112 (KLISGTYE) lie on the Cytoplasmic side of the membrane. A helical membrane pass occupies residues 113-133 (APSIFAALGASVTVIVNELMY). Over 134 to 164 (RYQICVGNENNSPAIIANAWDNRSDAISSAA) the chain is Lumenal. Residues 165–185 (VMVGVIASVIGFPIADTIAAI) traverse the membrane as a helical segment. Residues 186–297 (GVSALVGHIG…PAPAAVTVRV (112 aa)) lie on the Cytoplasmic side of the membrane. Residues 215-297 (LLQTAWQIAT…PAPAAVTVRV (83 aa)) are C-terminal domain (CTD).

Belongs to the cation diffusion facilitator (CDF) transporter (TC 2.A.4) family. Forms homodimers via its C-terminal domain, may form higher order multimers that are sensitive to reducing agent. Probably interacts with MamE. Interacts with MamM via their C-terminal domains.

Its subcellular location is the cell inner membrane. It is found in the magnetosome membrane. Functionally, plays a dual, essential role in magnetosome formation; required for magnetosome vesicle formation as well as biomineralization. Requires heterodimerization with MamM for stability. Probably binds and transports iron. One of 7 genes (mamLQBIEMO) able to induce magnetosome membrane biogenesis; coexpression of mamLQRBIEMO in a deletion of the 17 gene mamAB operon restores magnetosome vesicle formation but not magnetite biosynthesis. In Magnetospirillum gryphiswaldense (strain DSM 6361 / JCM 21280 / NBRC 15271 / MSR-1), this protein is Magnetosome protein MamB.